Reading from the N-terminus, the 81-residue chain is Acyl carrier protein (81 aa).

In terms of domain architecture, Carrier spans 4-79 (SEIFGKVKDI…AAVDFIAGKV (76 aa)). Ser39 carries the O-(pantetheine 4'-phosphoryl)serine modification.

It belongs to the acyl carrier protein (ACP) family. Post-translationally, 4'-phosphopantetheine is transferred from CoA to a specific serine of apo-ACP by AcpS. This modification is essential for activity because fatty acids are bound in thioester linkage to the sulfhydryl of the prosthetic group.

The protein resides in the cytoplasm. The protein operates within lipid metabolism; fatty acid biosynthesis. Carrier of the growing fatty acid chain in fatty acid biosynthesis. The chain is Acyl carrier protein from Acaryochloris marina (strain MBIC 11017).